Here is a 352-residue protein sequence, read N- to C-terminus: Holliday junction branch migration complex subunit RuvB (352 aa).

Residues 13–201 are large ATPase domain (RuvB-L); sequence IPRSRKELRL…FGLCHKIEFY (189 aa). ATP-binding positions include leucine 37, arginine 41, glycine 82, lysine 85, threonine 86, threonine 87, 148–150, arginine 191, tyrosine 201, and arginine 238; that span reads EDF. Residue threonine 86 participates in Mg(2+) binding. The small ATPAse domain (RuvB-S) stretch occupies residues 202 to 273; it reads SNDELKQIIF…IIEKALDSQK (72 aa). The segment at 276-352 is head domain (RuvB-H); sequence NRGLDNVDRK…KYISSNNEKY (77 aa). Arginine 330 and arginine 335 together coordinate DNA.

This sequence belongs to the RuvB family. Homohexamer. Forms an RuvA(8)-RuvB(12)-Holliday junction (HJ) complex. HJ DNA is sandwiched between 2 RuvA tetramers; dsDNA enters through RuvA and exits via RuvB. An RuvB hexamer assembles on each DNA strand where it exits the tetramer. Each RuvB hexamer is contacted by two RuvA subunits (via domain III) on 2 adjacent RuvB subunits; this complex drives branch migration. In the full resolvosome a probable DNA-RuvA(4)-RuvB(12)-RuvC(2) complex forms which resolves the HJ.

The protein localises to the cytoplasm. The enzyme catalyses ATP + H2O = ADP + phosphate + H(+). Functionally, the RuvA-RuvB-RuvC complex processes Holliday junction (HJ) DNA during genetic recombination and DNA repair, while the RuvA-RuvB complex plays an important role in the rescue of blocked DNA replication forks via replication fork reversal (RFR). RuvA specifically binds to HJ cruciform DNA, conferring on it an open structure. The RuvB hexamer acts as an ATP-dependent pump, pulling dsDNA into and through the RuvAB complex. RuvB forms 2 homohexamers on either side of HJ DNA bound by 1 or 2 RuvA tetramers; 4 subunits per hexamer contact DNA at a time. Coordinated motions by a converter formed by DNA-disengaged RuvB subunits stimulates ATP hydrolysis and nucleotide exchange. Immobilization of the converter enables RuvB to convert the ATP-contained energy into a lever motion, pulling 2 nucleotides of DNA out of the RuvA tetramer per ATP hydrolyzed, thus driving DNA branch migration. The RuvB motors rotate together with the DNA substrate, which together with the progressing nucleotide cycle form the mechanistic basis for DNA recombination by continuous HJ branch migration. Branch migration allows RuvC to scan DNA until it finds its consensus sequence, where it cleaves and resolves cruciform DNA. In Prochlorococcus marinus (strain MIT 9515), this protein is Holliday junction branch migration complex subunit RuvB.